Here is a 53-residue protein sequence, read N- to C-terminus: Large ribosomal subunit protein eL24 (53 aa).

4 residues coordinate Zn(2+): Cys4, Cys7, Cys30, and Cys34. The segment at 4–34 (CSFCHEEIEPGTGKMYVKRDGTIYFFCSSKC) adopts a C4-type zinc-finger fold.

It belongs to the eukaryotic ribosomal protein eL24 family. As to quaternary structure, part of the 50S ribosomal subunit. Forms a cluster with proteins L3 and L14. Zn(2+) serves as cofactor.

Binds to the 23S rRNA. The protein is Large ribosomal subunit protein eL24 of Methanothermobacter thermautotrophicus (strain ATCC 29096 / DSM 1053 / JCM 10044 / NBRC 100330 / Delta H) (Methanobacterium thermoautotrophicum).